Consider the following 332-residue polypeptide: L-lactate dehydrogenase A chain (332 aa).

An N-acetylalanine modification is found at A2. K5 is modified (N6-acetyllysine; alternate). K5 carries the post-translational modification N6-succinyllysine; alternate. Position 14 is an N6-acetyllysine (K14). Residue 29-57 participates in NAD(+) binding; the sequence is GAVGMACAISILMKDLADEVALVDVMEDK. An N6-acetyllysine; alternate modification is found at K57. A Glycyl lysine isopeptide (Lys-Gly) (interchain with G-Cter in SUMO2); alternate cross-link involves residue K57. Residue K81 is modified to N6-acetyllysine. R106 provides a ligand contact to substrate. K118 is modified (N6-acetyllysine; alternate). K118 is subject to N6-succinyllysine; alternate. K126 is modified (N6-acetyllysine). Residue N138 coordinates NAD(+). N138 and R169 together coordinate substrate. H193 (proton acceptor) is an active-site residue. An N6-acetyllysine mark is found at K224 and K232. Phosphotyrosine is present on Y239. N6-acetyllysine is present on K243. T248 is a substrate binding site. T309 is subject to Phosphothreonine. K318 is modified (N6-acetyllysine; alternate). K318 is modified (N6-succinyllysine; alternate). T322 is modified (phosphothreonine).

This sequence belongs to the LDH/MDH superfamily. LDH family. As to quaternary structure, homotetramer. Interacts with PTEN upstream reading frame protein MP31. ISGylated.

The protein resides in the cytoplasm. It carries out the reaction (S)-lactate + NAD(+) = pyruvate + NADH + H(+). It functions in the pathway fermentation; pyruvate fermentation to lactate; (S)-lactate from pyruvate: step 1/1. Interconverts simultaneously and stereospecifically pyruvate and lactate with concomitant interconversion of NADH and NAD(+). In Bos mutus grunniens (Wild yak), this protein is L-lactate dehydrogenase A chain (LDHA).